The following is a 448-amino-acid chain: uncharacterized protein (448 aa).

In terms of domain architecture, uDENN spans 4–155; that stretch reads QAIVLATFDA…SAVNLEFDSL (152 aa). Residues 183–326 form the cDENN domain; sequence LDHLGPAFYC…FKGLSRYLSF (144 aa). The dDENN domain maps to 328-428; that stretch reads GESSWGLTTY…WQYGKYFWLR (101 aa). Residues 425–447 traverse the membrane as a helical segment; the sequence is FWLRRVSLIFLASTCFLFILWKL.

Its subcellular location is the golgi apparatus membrane. The protein resides in the endoplasmic reticulum membrane. This is an uncharacterized protein from Schizosaccharomyces pombe (strain 972 / ATCC 24843) (Fission yeast).